Consider the following 392-residue polypeptide: Alpha-(1,3)-fucosyltransferase fut-6 (392 aa).

Residues 1–12 (MSQIGGATCTWR) lie on the Cytoplasmic side of the membrane. A helical; Signal-anchor for type II membrane protein membrane pass occupies residues 13 to 35 (YLGRFVTLGIYASVALFVWYTLV). Over 36 to 392 (PTRSKHKDSI…CNNQIASKYL (357 aa)) the chain is Lumenal. Asparagine 158 carries an N-linked (GlcNAc...) asparagine glycan.

The protein belongs to the glycosyltransferase 10 family. Requires Unlike other alpha-(1,3)-fucosyltransferases, appears not to require a divalent metal cation as cofactor. as cofactor.

It is found in the golgi apparatus. It localises to the golgi stack membrane. It participates in protein modification; protein glycosylation. Its activity is regulated as follows. Inhibited by divalent metal cations. Functionally, involved in the fucosylation of N-glycans. Preferentially catalyzes the addition of fucose in alpha 1-3 linkage to the distal GlcNAc residue in N-glycans. Catalyzes the transfer of fucose to Gal-beta-1-4-GlcNAc-alpha-pNP (LN-pNP) and Gal-beta-1-4-GlcNAc-beta-1-3-Gal-beta-1-4-Glc (LNnT). Unlike alpha-(1,3)-fucosyltransferase fut-1, does not transfer fucose to Man-alpha-1-3-(Man-alpha-1-6)-Man-beta-1-4-GlcNAc-beta-1-4-GlcNAc-beta-1-Asn (M3), Man-alpha-1-3-(Man-alpha-1-6)-Man-beta-1-4-GlcNAc-beta-1-4-(Fuc-alpha-1-6)-GlcNAc-beta-1-Asn (M3F6) and GlcNAc-beta-1-2-Man-alpha-1-3-(GlcNAc-beta-1-2-Man-alpha-1-6)-Man-beta-1-4-GlcNAc-beta-1-4(Fuc-alpha-1-6)-GlcNAc-beta-1-Asn (GnM3F6). The chain is Alpha-(1,3)-fucosyltransferase fut-6 from Caenorhabditis elegans.